The sequence spans 222 residues: Phosphoenolpyruvate guanylyltransferase (222 aa).

Phosphoenolpyruvate-binding residues include Thr147, Gly163, and Ser166.

Belongs to the CofC family.

The enzyme catalyses phosphoenolpyruvate + GTP + H(+) = enolpyruvoyl-2-diphospho-5'-guanosine + diphosphate. Its pathway is cofactor biosynthesis; coenzyme F420 biosynthesis. In terms of biological role, guanylyltransferase that catalyzes the activation of phosphoenolpyruvate (PEP) as enolpyruvoyl-2-diphospho-5'-guanosine, via the condensation of PEP with GTP. It is involved in the biosynthesis of coenzyme F420, a hydride carrier cofactor. This is Phosphoenolpyruvate guanylyltransferase from Streptosporangium roseum (strain ATCC 12428 / DSM 43021 / JCM 3005 / KCTC 9067 / NCIMB 10171 / NRRL 2505 / NI 9100).